We begin with the raw amino-acid sequence, 215 residues long: Phosphatidylserine decarboxylase proenzyme (215 aa).

Serine 185 serves as the catalytic Schiff-base intermediate with substrate; via pyruvic acid. Serine 185 carries the pyruvic acid (Ser); by autocatalysis modification.

Belongs to the phosphatidylserine decarboxylase family. PSD-A subfamily. Heterodimer of a large membrane-associated beta subunit and a small pyruvoyl-containing alpha subunit. Pyruvate serves as cofactor. In terms of processing, is synthesized initially as an inactive proenzyme. Formation of the active enzyme involves a self-maturation process in which the active site pyruvoyl group is generated from an internal serine residue via an autocatalytic post-translational modification. Two non-identical subunits are generated from the proenzyme in this reaction, and the pyruvate is formed at the N-terminus of the alpha chain, which is derived from the carboxyl end of the proenzyme. The post-translation cleavage follows an unusual pathway, termed non-hydrolytic serinolysis, in which the side chain hydroxyl group of the serine supplies its oxygen atom to form the C-terminus of the beta chain, while the remainder of the serine residue undergoes an oxidative deamination to produce ammonia and the pyruvoyl prosthetic group on the alpha chain.

It is found in the cell membrane. The enzyme catalyses a 1,2-diacyl-sn-glycero-3-phospho-L-serine + H(+) = a 1,2-diacyl-sn-glycero-3-phosphoethanolamine + CO2. Its pathway is phospholipid metabolism; phosphatidylethanolamine biosynthesis; phosphatidylethanolamine from CDP-diacylglycerol: step 2/2. In terms of biological role, catalyzes the formation of phosphatidylethanolamine (PtdEtn) from phosphatidylserine (PtdSer). This is Phosphatidylserine decarboxylase proenzyme from Streptomyces avermitilis (strain ATCC 31267 / DSM 46492 / JCM 5070 / NBRC 14893 / NCIMB 12804 / NRRL 8165 / MA-4680).